Reading from the N-terminus, the 327-residue chain is Autoinducer 2 import system permease protein LsrD (327 aa).

The next 9 membrane-spanning stretches (helical) occupy residues 3-23 (LNWE…FGAI), 41-61 (ICIG…GIDI), 63-83 (LGST…FGLP), 86-106 (LAVP…AALI), 114-134 (LVIT…LSGL), 158-178 (VLGL…FWLI), 211-231 (ALYG…VSYF), 257-277 (IYGG…VGYL), and 283-303 (MVGI…VVVV).

This sequence belongs to the binding-protein-dependent transport system permease family. AraH/RbsC subfamily. The complex is composed of two ATP-binding proteins (LsrA), two transmembrane proteins (LsrC and LsrD) and a solute-binding protein (LsrB).

The protein localises to the cell inner membrane. In terms of biological role, part of the ABC transporter complex LsrABCD involved in autoinducer 2 (AI-2) import. Probably responsible for the translocation of the substrate across the membrane. This chain is Autoinducer 2 import system permease protein LsrD (lsrD), found in Enterobacter sp. (strain 638).